A 439-amino-acid polypeptide reads, in one-letter code: Mitochondrial distribution and morphology protein 12 (439 aa).

An SMP-LTD domain is found at 1 to 439 (MSIDINWDTI…VYPSFWTFLV (439 aa)). Disordered stretches follow at residues 65–165 (PLPD…PGAL) and 229–284 (LTLT…HEKS). Acidic residues predominate over residues 69 to 90 (FYEDDEDYPDEEGDEAENEAED). Residues 109–121 (PSRDSQSRERGRG) are compositionally biased toward basic and acidic residues. A compositionally biased stretch (polar residues) spans 229–243 (LTLTPQSHPDPTSRP).

Belongs to the MDM12 family. As to quaternary structure, component of the ER-mitochondria encounter structure (ERMES) or MDM complex, composed of MMM1, MDM10, mdm12 and MDM34. An MMM1 homodimer associates with one molecule of mdm12 on each side in a pairwise head-to-tail manner, and the SMP-LTD domains of MMM1 and mdm12 generate a continuous hydrophobic tunnel for phospholipid trafficking.

The protein resides in the mitochondrion outer membrane. It is found in the endoplasmic reticulum membrane. Functionally, component of the ERMES/MDM complex, which serves as a molecular tether to connect the endoplasmic reticulum (ER) and mitochondria. Components of this complex are involved in the control of mitochondrial shape and protein biogenesis, and function in nonvesicular lipid trafficking between the ER and mitochondria. mdm12 is required for the interaction of the ER-resident membrane protein MMM1 and the outer mitochondrial membrane-resident beta-barrel protein MDM10. The mdm12-MMM1 subcomplex functions in the major beta-barrel assembly pathway that is responsible for biogenesis of all mitochondrial outer membrane beta-barrel proteins, and acts in a late step after the SAM complex. The MDM10-mdm12-MMM1 subcomplex further acts in the TOM40-specific pathway after the action of the mdm12-MMM1 complex. Essential for establishing and maintaining the structure of mitochondria and maintenance of mtDNA nucleoids. The protein is Mitochondrial distribution and morphology protein 12 of Pyrenophora tritici-repentis (strain Pt-1C-BFP) (Wheat tan spot fungus).